A 2287-amino-acid polypeptide reads, in one-letter code: Protein Ycf2 (2287 aa).

1641–1648 lines the ATP pocket; sequence GSIGTGRS.

This sequence belongs to the Ycf2 family.

Its subcellular location is the plastid. The protein localises to the chloroplast stroma. Probable ATPase of unknown function. Its presence in a non-photosynthetic plant (Epifagus virginiana) and experiments in tobacco indicate that it has an essential function which is probably not related to photosynthesis. The protein is Protein Ycf2 of Lepidium virginicum (Virginia pepperweed).